Consider the following 422-residue polypeptide: Probable tRNA pseudouridine synthase D 2 (422 aa).

D89 serves as the catalytic Nucleophile. The region spanning 160-371 (GAPNYFDSQR…IYSERKILSI (212 aa)) is the TRUD domain.

It belongs to the pseudouridine synthase TruD family.

It carries out the reaction uridine(13) in tRNA = pseudouridine(13) in tRNA. In terms of biological role, could be responsible for synthesis of pseudouridine from uracil-13 in transfer RNAs. The protein is Probable tRNA pseudouridine synthase D 2 of Methanocaldococcus jannaschii (strain ATCC 43067 / DSM 2661 / JAL-1 / JCM 10045 / NBRC 100440) (Methanococcus jannaschii).